The following is a 315-amino-acid chain: Olfactory receptor 5AN6 (315 aa).

Topologically, residues 1-29 (MPGGRNSTVITKFILVGFSDFPKLKLVLF) are extracellular. A helical transmembrane segment spans residues 30–50 (VIFLGSYLSTVVWNLGLIILI). Over 51–54 (RIDP) the chain is Cytoplasmic. A helical transmembrane segment spans residues 55 to 75 (YLHTPMYFFLSNLSFLDFCYI). Residues 76-99 (SSTTPKMLSGFFQKSKSISFVGCT) lie on the Extracellular side of the membrane. C98 and C180 are joined by a disulfide. Residues 100 to 120 (MQYFIFSSLGLSECCLLAAMA) traverse the membrane as a helical segment. At 121-123 (YDR) the chain is on the cytoplasmic side. A helical transmembrane segment spans residues 124 to 143 (YAAICNPLLYTAIMSPSLCV). A topological domain (extracellular) is located at residue H144. The chain crosses the membrane as a helical span at residues 145–165 (MVVGAYSTGLLGSLIQLCAIL). Topologically, residues 166 to 202 (QLHFCGPNIINHFFCDLPQLLVLSCSETFPLQVLKFV) are cytoplasmic. The chain crosses the membrane as a helical span at residues 203–223 (IAVIFGVASVIVILISYGYII). The Extracellular portion of the chain corresponds to 224–240 (GTILNISSVEGRSKAFN). The chain crosses the membrane as a helical span at residues 241–261 (TCASHLTAVTLFFGSGLFVYM). At 262–272 (RPSSNSSQGYD) the chain is on the cytoplasmic side. Residues 273-293 (KMASVFYTVVIPMLNPLIYSL) form a helical membrane-spanning segment. At 294 to 315 (RNKEIKDALQRCKNKCFSQCHC) the chain is on the extracellular side.

Belongs to the G-protein coupled receptor 1 family. In terms of tissue distribution, localized in the dorsomedial and ventral region of the olfactory bulb.

It is found in the cell membrane. Functionally, odorant receptor specific for muscone. Muscone-binding causes a conformation change that triggers signaling via G(s)-class of G alpha protein GNAL, activating adenylyl cyclase. In Mus musculus (Mouse), this protein is Olfactory receptor 5AN6.